A 322-amino-acid polypeptide reads, in one-letter code: ATP-dependent 6-phosphofructokinase (322 aa).

ATP is bound by residues Gly12, 73 to 74 (RF), and 103 to 106 (GDGT). A Mg(2+)-binding site is contributed by Asp104. 126–128 (TID) contacts substrate. The active-site Proton acceptor is the Asp128. An ADP-binding site is contributed by Arg155. Substrate-binding positions include Arg163 and 170–172 (MGR). Residues 186–188 (GSE), Lys212, and 214–216 (KPS) contribute to the ADP site. Substrate is bound by residues Glu223, Arg245, and 251 to 254 (HTQR).

This sequence belongs to the phosphofructokinase type A (PFKA) family. ATP-dependent PFK group I subfamily. Prokaryotic clade 'B1' sub-subfamily. In terms of assembly, homotetramer. Mg(2+) is required as a cofactor.

Its subcellular location is the cytoplasm. It carries out the reaction beta-D-fructose 6-phosphate + ATP = beta-D-fructose 1,6-bisphosphate + ADP + H(+). Its pathway is carbohydrate degradation; glycolysis; D-glyceraldehyde 3-phosphate and glycerone phosphate from D-glucose: step 3/4. Allosterically activated by ADP and other diphosphonucleosides, and allosterically inhibited by phosphoenolpyruvate. Its function is as follows. Catalyzes the phosphorylation of D-fructose 6-phosphate to fructose 1,6-bisphosphate by ATP, the first committing step of glycolysis. The protein is ATP-dependent 6-phosphofructokinase of Mesomycoplasma hyopneumoniae (strain J / ATCC 25934 / NCTC 10110) (Mycoplasma hyopneumoniae).